We begin with the raw amino-acid sequence, 125 residues long: Small ribosomal subunit protein uS13 (125 aa).

Belongs to the universal ribosomal protein uS13 family. As to quaternary structure, part of the 30S ribosomal subunit. Forms a loose heterodimer with protein S19. Forms two bridges to the 50S subunit in the 70S ribosome.

Functionally, located at the top of the head of the 30S subunit, it contacts several helices of the 16S rRNA. In the 70S ribosome it contacts the 23S rRNA (bridge B1a) and protein L5 of the 50S subunit (bridge B1b), connecting the 2 subunits; these bridges are implicated in subunit movement. Contacts the tRNAs in the A and P-sites. The protein is Small ribosomal subunit protein uS13 of Orientia tsutsugamushi (strain Boryong) (Rickettsia tsutsugamushi).